Here is a 114-residue protein sequence, read N- to C-terminus: Large ribosomal subunit protein bL19 (114 aa).

The protein belongs to the bacterial ribosomal protein bL19 family.

Its function is as follows. This protein is located at the 30S-50S ribosomal subunit interface and may play a role in the structure and function of the aminoacyl-tRNA binding site. The polypeptide is Large ribosomal subunit protein bL19 (Listeria welshimeri serovar 6b (strain ATCC 35897 / DSM 20650 / CCUG 15529 / CIP 8149 / NCTC 11857 / SLCC 5334 / V8)).